The chain runs to 98 residues: DNA-binding protein Fis (98 aa).

The H-T-H motif DNA-binding region spans 74-93 (QTRAALMMGINRGTLRKKLK).

It belongs to the transcriptional regulatory Fis family. As to quaternary structure, homodimer.

Activates ribosomal RNA transcription. Plays a direct role in upstream activation of rRNA promoters. The protein is DNA-binding protein Fis of Citrobacter koseri (strain ATCC BAA-895 / CDC 4225-83 / SGSC4696).